The chain runs to 597 residues: MKHIRNFSIIAHIDHGKSTLSDRLIQVCGGLSDREMAAQVLDSMDLERERGITIKAQSVTLDYTAKDGETYQLNFIDTPGHVDFSYEVSRSLAACEGALLVVDAGQGVEAQTLANCYTAIEMDLEVVPILNKIDLPAADPDRVAEEIEEIVGIDATDATRCSAKTGLGVDEVLETIVKSIPAPEGDPEAPTQALIIDSWFDNYLGVVSLVRIKNGSLKKNDKIKVMSTGQVWGIDRIGIFTPKQIDTDVLNTGEVGWVVCGIKDILGAPVGDTLTHAKGGCEERLPGFQKVKPQVYAGLFPVSSDDYENFRDALGKLSLNDASLFYEPESSAALGFGFRCGFLGMLHMEIIQERLEREYDLDLITTAPTVVYEVAKTDGEILYVDSPAKLPAVNDIDEIREPIARCNILVPSDYLGNVITLCVEKRGVQVDMQYHGNQVAVTYDVPMAEVVLDFFDRLKSTSRGYASLDYNFQRYEASSMVRVDVLLNGDKVDALAIITHKDNSQSRGRLLVEKMKEFIPRQMFDIAIQAAIGNHIIARSTVKQLRKNVIAKCYGGDVSRKKKLLKKQKEGKKRMKQIGNVELPQEAFLAILHVGKD.

The 183-residue stretch at 2-184 (KHIRNFSIIA…TIVKSIPAPE (183 aa)) folds into the tr-type G domain. GTP-binding positions include 14-19 (DHGKST) and 131-134 (NKID).

It belongs to the TRAFAC class translation factor GTPase superfamily. Classic translation factor GTPase family. LepA subfamily.

Its subcellular location is the cell inner membrane. It carries out the reaction GTP + H2O = GDP + phosphate + H(+). In terms of biological role, required for accurate and efficient protein synthesis under certain stress conditions. May act as a fidelity factor of the translation reaction, by catalyzing a one-codon backward translocation of tRNAs on improperly translocated ribosomes. Back-translocation proceeds from a post-translocation (POST) complex to a pre-translocation (PRE) complex, thus giving elongation factor G a second chance to translocate the tRNAs correctly. Binds to ribosomes in a GTP-dependent manner. The chain is Elongation factor 4 from Aliivibrio fischeri (strain ATCC 700601 / ES114) (Vibrio fischeri).